A 148-amino-acid polypeptide reads, in one-letter code: C-C motif chemokine 2 (148 aa).

The N-terminal stretch at 1–23 (MQVPVMLLGLLFTVAGWSIHVLA) is a signal peptide. Residue Q24 is modified to Pyrrolidone carboxylic acid. 2 disulfides stabilise this stretch: C34/C59 and C35/C75. N126 is a glycosylation site (N-linked (GlcNAc...) asparagine).

This sequence belongs to the intercrine beta (chemokine CC) family. As to quaternary structure, monomer or homodimer; in equilibrium. Is tethered on endothelial cells by glycosaminoglycan (GAG) side chains of proteoglycans. Interacts with TNFAIP6 (via Link domain). In terms of processing, processing at the N-terminus can regulate receptor and target cell selectivity. Deletion of the N-terminal residue converts it from an activator of basophil to an eosinophil chemoattractant. Post-translationally, N-Glycosylated.

It localises to the secreted. In terms of biological role, acts as a ligand for C-C chemokine receptor CCR2. Signals through binding and activation of CCR2 and induces a strong chemotactic response and mobilization of intracellular calcium ions. Exhibits a chemotactic activity for monocytes and basophils but not neutrophils or eosinophils. Plays an important role in mediating peripheral nerve injury-induced neuropathic pain. Increases NMDA-mediated synaptic transmission in both dopamine D1 and D2 receptor-containing neurons, which may be caused by MAPK/ERK-dependent phosphorylation of GRIN2B/NMDAR2B. In Mus musculus (Mouse), this protein is C-C motif chemokine 2 (Ccl2).